Here is a 557-residue protein sequence, read N- to C-terminus: Formate--tetrahydrofolate ligase (557 aa).

ATP is bound at residue 65–72 (TPAGEGKT).

Belongs to the formate--tetrahydrofolate ligase family.

It carries out the reaction (6S)-5,6,7,8-tetrahydrofolate + formate + ATP = (6R)-10-formyltetrahydrofolate + ADP + phosphate. It participates in one-carbon metabolism; tetrahydrofolate interconversion. This is Formate--tetrahydrofolate ligase from Methylobacterium radiotolerans (strain ATCC 27329 / DSM 1819 / JCM 2831 / NBRC 15690 / NCIMB 10815 / 0-1).